Reading from the N-terminus, the 434-residue chain is Histidinol dehydrogenase (434 aa).

Positions 130, 188, and 211 each coordinate NAD(+). Substrate contacts are provided by Ser-237, Gln-259, and His-262. The Zn(2+) site is built by Gln-259 and His-262. Catalysis depends on proton acceptor residues Glu-326 and His-327. Residues His-327, Asp-360, Glu-414, and His-419 each coordinate substrate. Asp-360 contacts Zn(2+). A Zn(2+)-binding site is contributed by His-419.

The protein belongs to the histidinol dehydrogenase family. In terms of assembly, homodimer. Zn(2+) is required as a cofactor.

It catalyses the reaction L-histidinol + 2 NAD(+) + H2O = L-histidine + 2 NADH + 3 H(+). It functions in the pathway amino-acid biosynthesis; L-histidine biosynthesis; L-histidine from 5-phospho-alpha-D-ribose 1-diphosphate: step 9/9. Its function is as follows. Catalyzes the sequential NAD-dependent oxidations of L-histidinol to L-histidinaldehyde and then to L-histidine. The protein is Histidinol dehydrogenase of Salmonella typhi.